Here is a 343-residue protein sequence, read N- to C-terminus: Putative dihydroflavonol 4-reductase (343 aa).

Y150 is an NADP(+) binding site.

The protein belongs to the NAD(P)-dependent epimerase/dehydratase family. Dihydroflavonol-4-reductase subfamily.

It carries out the reaction a (2R,3S,4S)-leucoanthocyanidin + NADP(+) = a (2R,3R)-dihydroflavonol + NADPH + H(+). The protein operates within secondary metabolite biosynthesis; flavonoid biosynthesis. In Synechocystis sp. (strain ATCC 27184 / PCC 6803 / Kazusa), this protein is Putative dihydroflavonol 4-reductase (dfrA).